The sequence spans 494 residues: UPF0371 protein SP70585_0405 (494 aa).

Belongs to the UPF0371 family.

The polypeptide is UPF0371 protein SP70585_0405 (Streptococcus pneumoniae (strain 70585)).